The primary structure comprises 889 residues: 97 kDa heat shock protein (889 aa).

Disordered regions lie at residues 504–622 (EDAM…ATTD) and 812–889 (FVCD…MELD). Over residues 549 to 585 (SADKEEQADNGSKETSKDSKDQTSESSKSDKESKDQN) the composition is skewed to basic and acidic residues. Polar residues predominate over residues 586–597 (SEGSKSDNSSTE). Positions 869 to 889 (ASKEGETKPDETKPDVEMELD) are enriched in basic and acidic residues.

It belongs to the heat shock protein 70 family.

Functionally, cell surface recognition protein that binds acrosome-reacted sperm and thereby mediates binding and subsequent fusion of the sperm and egg. This is 97 kDa heat shock protein from Strongylocentrotus purpuratus (Purple sea urchin).